The following is a 123-amino-acid chain: Histone H2B 2 (123 aa).

A disordered region spans residues 1-32; it reads MAPPKPSAKGAKKAAKTVTKPKDGKKRRHARK. Residue serine 110 is glycosylated (O-linked (GlcNAc) serine). Lysine 118 is covalently cross-linked (Glycyl lysine isopeptide (Lys-Gly) (interchain with G-Cter in ubiquitin)).

This sequence belongs to the histone H2B family. In terms of assembly, the nucleosome is a histone octamer containing two molecules each of H2A, H2B, H3 and H4 assembled in one H3-H4 heterotetramer and two H2A-H2B heterodimers. The octamer wraps approximately 147 bp of DNA. Post-translationally, monoubiquitination of Lys-118 gives a specific tag for epigenetic transcriptional activation and is also prerequisite for histone H3 'Lys-4' and 'Lys-79' methylation. GlcNAcylation at Ser-110 promotes monoubiquitination of Lys-118. It fluctuates in response to extracellular glucose, and associates with transcribed genes.

It localises to the nucleus. The protein resides in the chromosome. Core component of nucleosome. Nucleosomes wrap and compact DNA into chromatin, limiting DNA accessibility to the cellular machineries which require DNA as a template. Histones thereby play a central role in transcription regulation, DNA repair, DNA replication and chromosomal stability. DNA accessibility is regulated via a complex set of post-translational modifications of histones, also called histone code, and nucleosome remodeling. The sequence is that of Histone H2B 2 (his-4) from Caenorhabditis elegans.